Here is a 367-residue protein sequence, read N- to C-terminus: F-box protein At3g56470 (367 aa).

The segment covering 1–18 (MVTRRRSKKKKKTKRKKQ) has biased composition (basic residues). A disordered region spans residues 1–24 (MVTRRRSKKKKKTKRKKQSSKEKE). The region spanning 26-81 (YQTFINLPCDLLQLVISRLPLKDNIRASAVCKTWHEACVSLRVIHTSPWLIYFSKT) is the F-box domain.

This is F-box protein At3g56470 from Arabidopsis thaliana (Mouse-ear cress).